Consider the following 325-residue polypeptide: 33 kDa chaperonin (325 aa).

Intrachain disulfides connect cysteine 260–cysteine 262 and cysteine 293–cysteine 296.

It belongs to the HSP33 family. In terms of processing, under oxidizing conditions two disulfide bonds are formed involving the reactive cysteines. Under reducing conditions zinc is bound to the reactive cysteines and the protein is inactive.

It is found in the cytoplasm. Its function is as follows. Redox regulated molecular chaperone. Protects both thermally unfolding and oxidatively damaged proteins from irreversible aggregation. Plays an important role in the bacterial defense system toward oxidative stress. This chain is 33 kDa chaperonin, found in Aquifex aeolicus (strain VF5).